A 427-amino-acid polypeptide reads, in one-letter code: Trigger factor (427 aa).

Positions 163–248 constitute a PPIase FKBP-type domain; the sequence is GDTVVIDFVG…IHEVKAKEVP (86 aa).

It belongs to the FKBP-type PPIase family. Tig subfamily.

The protein localises to the cytoplasm. The enzyme catalyses [protein]-peptidylproline (omega=180) = [protein]-peptidylproline (omega=0). In terms of biological role, involved in protein export. Acts as a chaperone by maintaining the newly synthesized protein in an open conformation. Functions as a peptidyl-prolyl cis-trans isomerase. The chain is Trigger factor from Streptococcus pneumoniae (strain Taiwan19F-14).